The sequence spans 129 residues: Small ribosomal subunit protein uS11 (129 aa).

It belongs to the universal ribosomal protein uS11 family. In terms of assembly, part of the 30S ribosomal subunit. Interacts with proteins S7 and S18. Binds to IF-3.

Located on the platform of the 30S subunit, it bridges several disparate RNA helices of the 16S rRNA. Forms part of the Shine-Dalgarno cleft in the 70S ribosome. The chain is Small ribosomal subunit protein uS11 from Jannaschia sp. (strain CCS1).